The primary structure comprises 187 residues: Dirigent protein 6 (187 aa).

The signal sequence occupies residues 1–29 (MAFLVEKQLFKALFSFFLLVLLFSDTVLS). The cysteines at positions 40 and 186 are disulfide-linked. N59 and N123 each carry an N-linked (GlcNAc...) asparagine glycan.

The protein belongs to the plant dirigent protein family. As to quaternary structure, homodimer. In terms of tissue distribution, expressed in roots, cotyledon veins, leaf trichomes, flowers, siliques, and meristems. Present in interfascicular/vascular cambia and developing xylem.

The protein localises to the secreted. The protein resides in the extracellular space. Its subcellular location is the apoplast. In terms of biological role, dirigent proteins impart stereoselectivity on the phenoxy radical-coupling reaction, yielding optically active lignans from two molecules of coniferyl alcohol in the biosynthesis of lignans, flavonolignans, and alkaloids and thus plays a central role in plant secondary metabolism. Enantiocomplementary dirigent protein that mediates the laccase-catalyzed enantioselective oxidative phenol coupling of (E)-coniferyl alcohol to (-)-pinoresinol. This is Dirigent protein 6 (DIR6) from Arabidopsis thaliana (Mouse-ear cress).